A 597-amino-acid polypeptide reads, in one-letter code: Arginine--tRNA ligase (597 aa).

Positions Ala138–His148 match the 'HIGH' region motif.

This sequence belongs to the class-I aminoacyl-tRNA synthetase family. As to quaternary structure, monomer.

The protein localises to the cytoplasm. The enzyme catalyses tRNA(Arg) + L-arginine + ATP = L-arginyl-tRNA(Arg) + AMP + diphosphate. In Rhodopseudomonas palustris (strain ATCC BAA-98 / CGA009), this protein is Arginine--tRNA ligase.